The following is a 166-amino-acid chain: MTKTTRLLRATTVAAILLGLTGCAVHLPASAQTPGKQADGVQVSKAWVKAAGSGMTAAFGDVKNTGSGTAIVVGATSSAASSLQLHETVTKNGAETMQEAKSGFRIPAGSTLHLAPGGSHIMLMGLKAPLEAGQKISVTLRFSDGSTSPVAVPVKDFSGANENYKG.

An N-terminal signal peptide occupies residues 1 to 22 (MTKTTRLLRATTVAAILLGLTG). A lipid anchor (N-palmitoyl cysteine) is attached at C23. The S-diacylglycerol cysteine moiety is linked to residue C23.

Its subcellular location is the cell membrane. This Leifsonia xyli subsp. xyli (strain CTCB07) protein is Putative lipoprotein Lxx21020.